We begin with the raw amino-acid sequence, 332 residues long: Ribosomal RNA small subunit methyltransferase H (332 aa).

S-adenosyl-L-methionine is bound by residues 38 to 40, aspartate 56, phenylalanine 83, aspartate 104, and glutamine 111; that span reads GGY. The disordered stretch occupies residues 309–332; sequence TETPFSEDISRPDTHIPRSRRQSA.

This sequence belongs to the methyltransferase superfamily. RsmH family.

The protein localises to the cytoplasm. It catalyses the reaction cytidine(1402) in 16S rRNA + S-adenosyl-L-methionine = N(4)-methylcytidine(1402) in 16S rRNA + S-adenosyl-L-homocysteine + H(+). Functionally, specifically methylates the N4 position of cytidine in position 1402 (C1402) of 16S rRNA. In Zymomonas mobilis subsp. mobilis (strain ATCC 31821 / ZM4 / CP4), this protein is Ribosomal RNA small subunit methyltransferase H.